The following is a 243-amino-acid chain: Protein-L-isoaspartate O-methyltransferase 2 (243 aa).

The tract at residues 21-42 is disordered; that stretch reads DACADRGHPSAERSTPETERRR. The segment covering 23-42 has biased composition (basic and acidic residues); that stretch reads CADRGHPSAERSTPETERRR. The active site involves Ser94.

Belongs to the methyltransferase superfamily. L-isoaspartyl/D-aspartyl protein methyltransferase family.

It is found in the cytoplasm. It catalyses the reaction [protein]-L-isoaspartate + S-adenosyl-L-methionine = [protein]-L-isoaspartate alpha-methyl ester + S-adenosyl-L-homocysteine. Its function is as follows. Catalyzes the methyl esterification of L-isoaspartyl residues in peptides and proteins that result from spontaneous decomposition of normal L-aspartyl and L-asparaginyl residues. It plays a role in the repair and/or degradation of damaged proteins. In Anaeromyxobacter sp. (strain Fw109-5), this protein is Protein-L-isoaspartate O-methyltransferase 2.